Reading from the N-terminus, the 120-residue chain is UPF0231 protein ETA_08290 (120 aa).

This sequence belongs to the UPF0231 family.

The sequence is that of UPF0231 protein ETA_08290 from Erwinia tasmaniensis (strain DSM 17950 / CFBP 7177 / CIP 109463 / NCPPB 4357 / Et1/99).